A 410-amino-acid polypeptide reads, in one-letter code: Zinc transporter ttm-1 (410 aa).

Low complexity-rich tracts occupy residues 1–13 (MTIS…SIRL) and 35–46 (SVSSSDSGVSAD). The interval 1 to 94 (MTISMISPSS…GAHKHSHDEK (94 aa)) is disordered. Residues 1 to 103 (MTISMISPSS…KYQKGRRAEK (103 aa)) are Cytoplasmic-facing. Positions 50–69 (HHHHGHGHGHSHGGHGHSHT) are enriched in basic residues. The helical transmembrane segment at 104-124 (VLWAVAALSAVFIAAEFVGGF) threads the bilayer. Over 125–129 (WAQSL) the chain is Extracellular. Residues 130 to 150 (AIMTDAGHMLSDLLSFIISIF) traverse the membrane as a helical segment. Over 151–171 (AIRCARLPASKRLSFGYERAE) the chain is Cytoplasmic. Residues 172 to 192 (VLGALTSVIILWVLTTVLVVV) form a helical membrane-spanning segment. Topologically, residues 193–208 (AIQRIVNNEHEVDADV) are extracellular. Residues 209 to 229 (MLITAGVGVLFNIVMGLVLHF) traverse the membrane as a helical segment. Over 230–258 (GTGGHGHTHGGHSSHGHAHDGKNVNVRAA) the chain is Cytoplasmic. Residues 259–279 (LIHVIGDLVQSIGVLIAALII) traverse the membrane as a helical segment. Residue R280 is a topological domain, extracellular. The chain crosses the membrane as a helical span at residues 281–301 (FTGWTLADPICTFLFSIIVLF). The Cytoplasmic portion of the chain corresponds to 302 to 410 (TTVTVMRDIF…CDTCQQQETA (109 aa)).

The protein belongs to the cation diffusion facilitator (CDF) transporter (TC 2.A.4) family. SLC30A subfamily. In terms of tissue distribution, isoform a: Expressed in the hypodermis and the intestine. Isoform b: Expressed in the intestine, head neurons, seam cells, hypodermis, and the vulva.

The protein localises to the cytoplasmic vesicle membrane. Its subcellular location is the apical cell membrane. In terms of biological role, promotes excretion of zinc from intestinal cells into the intestinal lumen in response to increased dietary zinc. Involved in cadmium resistance, possibly by promoting its transport from cells. Involved in resistance to B.thuringiensis pore-forming toxin Cry5B downstream of the sek-1 and pmk-1 MAPK kinase pathway. This is Zinc transporter ttm-1 from Caenorhabditis elegans.